A 294-amino-acid polypeptide reads, in one-letter code: Putative sugar lactone lactonase (294 aa).

Residues Glu-21, Asn-150, and Asp-201 each contribute to the a divalent metal cation site. The active-site Proton donor/acceptor is Asp-201.

Belongs to the SMP-30/CGR1 family. A divalent metal cation is required as a cofactor.

Involved in the degradation of galactose via the DeLey-Doudoroff pathway. This chain is Putative sugar lactone lactonase, found in Rhizobium meliloti (strain 1021) (Ensifer meliloti).